Here is a 279-residue protein sequence, read N- to C-terminus: Tryptophan 2,3-dioxygenase (279 aa).

Residues 48 to 52, Tyr-110, and Arg-114 each bind substrate; that span reads FIIQH. His-237 serves as a coordination point for heme. Thr-251 provides a ligand contact to substrate.

It belongs to the tryptophan 2,3-dioxygenase family. In terms of assembly, homotetramer. Requires heme as cofactor.

It carries out the reaction L-tryptophan + O2 = N-formyl-L-kynurenine. The protein operates within amino-acid degradation; L-tryptophan degradation via kynurenine pathway; L-kynurenine from L-tryptophan: step 1/2. Its function is as follows. Heme-dependent dioxygenase that catalyzes the oxidative cleavage of the L-tryptophan (L-Trp) pyrrole ring and converts L-tryptophan to N-formyl-L-kynurenine. Catalyzes the oxidative cleavage of the indole moiety. This is Tryptophan 2,3-dioxygenase from Ruegeria sp. (strain TM1040) (Silicibacter sp.).